Here is a 316-residue protein sequence, read N- to C-terminus: Ribosomal RNA small subunit methyltransferase H (316 aa).

Residues 35 to 37 (AGH), D55, F84, D105, and Q112 contribute to the S-adenosyl-L-methionine site.

The protein belongs to the methyltransferase superfamily. RsmH family.

The protein localises to the cytoplasm. The enzyme catalyses cytidine(1402) in 16S rRNA + S-adenosyl-L-methionine = N(4)-methylcytidine(1402) in 16S rRNA + S-adenosyl-L-homocysteine + H(+). Functionally, specifically methylates the N4 position of cytidine in position 1402 (C1402) of 16S rRNA. In Streptococcus pneumoniae (strain JJA), this protein is Ribosomal RNA small subunit methyltransferase H.